The sequence spans 147 residues: Hemoglobin subunit epsilon (147 aa).

The Globin domain maps to 3 to 147 (HFTAEEKAAI…VAIALGHKYH (145 aa)). 2 positions are modified to phosphoserine: S14 and S51. Residues H64 and H93 each contribute to the heme b site.

Belongs to the globin family. In terms of assembly, heterotetramer of two alpha chains and two epsilon chains in early embryonic hemoglobin Gower-2; two zeta chains and two epsilon chains in early embryonic hemoglobin Gower-1. Red blood cells.

Functionally, the epsilon chain is a beta-type chain of early mammalian embryonic hemoglobin. This chain is Hemoglobin subunit epsilon (HBE1), found in Pithecia irrorata (Gray monk saki).